Here is a 160-residue protein sequence, read N- to C-terminus: Nucleotide-binding protein VS_1405 (160 aa).

This sequence belongs to the YajQ family.

In terms of biological role, nucleotide-binding protein. In Vibrio atlanticus (strain LGP32) (Vibrio splendidus (strain Mel32)), this protein is Nucleotide-binding protein VS_1405.